Consider the following 216-residue polypeptide: FMN-dependent NADH:quinone oxidoreductase (216 aa).

FMN is bound by residues S10 and 15–17; that span reads SIS.

This sequence belongs to the azoreductase type 1 family. Homodimer. It depends on FMN as a cofactor.

It catalyses the reaction 2 a quinone + NADH + H(+) = 2 a 1,4-benzosemiquinone + NAD(+). The enzyme catalyses N,N-dimethyl-1,4-phenylenediamine + anthranilate + 2 NAD(+) = 2-(4-dimethylaminophenyl)diazenylbenzoate + 2 NADH + 2 H(+). Its function is as follows. Quinone reductase that provides resistance to thiol-specific stress caused by electrophilic quinones. Functionally, also exhibits azoreductase activity. Catalyzes the reductive cleavage of the azo bond in aromatic azo compounds to the corresponding amines. In Nocardia farcinica (strain IFM 10152), this protein is FMN-dependent NADH:quinone oxidoreductase.